The primary structure comprises 947 residues: Valine--tRNA ligase (947 aa).

The 'HIGH' region signature appears at 45–55 (PNVTGSLHMGH). The 'KMSKS' region signature appears at 591 to 595 (KMSKS). Lysine 594 is a binding site for ATP. The stretch at 879–943 (DLAAEQARLE…ASLRTALTRV (65 aa)) forms a coiled coil.

This sequence belongs to the class-I aminoacyl-tRNA synthetase family. ValS type 1 subfamily. In terms of assembly, monomer.

Its subcellular location is the cytoplasm. It carries out the reaction tRNA(Val) + L-valine + ATP = L-valyl-tRNA(Val) + AMP + diphosphate. Functionally, catalyzes the attachment of valine to tRNA(Val). As ValRS can inadvertently accommodate and process structurally similar amino acids such as threonine, to avoid such errors, it has a 'posttransfer' editing activity that hydrolyzes mischarged Thr-tRNA(Val) in a tRNA-dependent manner. The chain is Valine--tRNA ligase from Agrobacterium fabrum (strain C58 / ATCC 33970) (Agrobacterium tumefaciens (strain C58)).